A 78-amino-acid polypeptide reads, in one-letter code: Large ribosomal subunit protein bL28 (78 aa).

It belongs to the bacterial ribosomal protein bL28 family.

In Parasynechococcus marenigrum (strain WH8102), this protein is Large ribosomal subunit protein bL28.